A 395-amino-acid polypeptide reads, in one-letter code: Succinyl-diaminopimelate desuccinylase (395 aa).

His-74 provides a ligand contact to Zn(2+). Asp-76 is a catalytic residue. Zn(2+) is bound at residue Asp-107. Residue Glu-141 is the Proton acceptor of the active site. Residues Glu-142, Glu-170, and His-368 each contribute to the Zn(2+) site.

It belongs to the peptidase M20A family. DapE subfamily. Homodimer. Requires Zn(2+) as cofactor. Co(2+) is required as a cofactor.

It carries out the reaction N-succinyl-(2S,6S)-2,6-diaminopimelate + H2O = (2S,6S)-2,6-diaminopimelate + succinate. It participates in amino-acid biosynthesis; L-lysine biosynthesis via DAP pathway; LL-2,6-diaminopimelate from (S)-tetrahydrodipicolinate (succinylase route): step 3/3. Its function is as follows. Catalyzes the hydrolysis of N-succinyl-L,L-diaminopimelic acid (SDAP), forming succinate and LL-2,6-diaminopimelate (DAP), an intermediate involved in the bacterial biosynthesis of lysine and meso-diaminopimelic acid, an essential component of bacterial cell walls. The protein is Succinyl-diaminopimelate desuccinylase of Brucella anthropi (strain ATCC 49188 / DSM 6882 / CCUG 24695 / JCM 21032 / LMG 3331 / NBRC 15819 / NCTC 12168 / Alc 37) (Ochrobactrum anthropi).